The chain runs to 149 residues: MAVKPSANLGKAFQLPHPFNSCVYIQIPPQPTWSINEYWERNPNKQYLDESDTTYLEELTLTPIEKHQALEKLNTIISAADRLQEVDTKNVDPMYTCVDEREMYMNSGQDGETVNKEEILGNAHKIFQDYFTAPTSEKMRSSSDLNAKE.

It belongs to the GatC family. Subunit of the heterotrimeric GatCAB amidotransferase (AdT) complex, composed of A, B and C subunits.

It is found in the mitochondrion. It carries out the reaction L-glutamyl-tRNA(Gln) + L-glutamine + ATP + H2O = L-glutaminyl-tRNA(Gln) + L-glutamate + ADP + phosphate + H(+). Its function is as follows. Allows the formation of correctly charged Gln-tRNA(Gln) through the transamidation of misacylated Glu-tRNA(Gln) in the mitochondria. The reaction takes place in the presence of glutamine and ATP through an activated gamma-phospho-Glu-tRNA(Gln). The chain is Glutamyl-tRNA(Gln) amidotransferase subunit C, mitochondrial from Trichoplax adhaerens (Trichoplax reptans).